Consider the following 208-residue polypeptide: Small ribosomal subunit protein uS4 (208 aa).

The region spanning 98 to 159 is the S4 RNA-binding domain; the sequence is RRLDNVIYRL…KSRTVAVITN (62 aa).

This sequence belongs to the universal ribosomal protein uS4 family. As to quaternary structure, part of the 30S ribosomal subunit. Contacts protein S5. The interaction surface between S4 and S5 is involved in control of translational fidelity.

In terms of biological role, one of the primary rRNA binding proteins, it binds directly to 16S rRNA where it nucleates assembly of the body of the 30S subunit. Its function is as follows. With S5 and S12 plays an important role in translational accuracy. The protein is Small ribosomal subunit protein uS4 of Desulfatibacillum aliphaticivorans.